The primary structure comprises 413 residues: Mitochondrial inner membrane magnesium transporter MFM1 (413 aa).

The N-terminal 35 residues, 1–35 (MRAFPRVLPFRHQRSYNNILLRTVRLFGSSLSSFD), are a transit peptide targeting the mitochondrion. Asn202 carries an N-linked (GlcNAc...) asparagine glycan. Residues 329-349 (LMLLGIRYAIGMLSLGGALFL) form a helical membrane-spanning segment. A YGMN motif is present at residues 353 to 356 (YGMN). Residues 367-387 (AYLTVTILGLISTVWLYAKGI) traverse the membrane as a helical segment.

The protein belongs to the CorA metal ion transporter (MIT) (TC 1.A.35) family. Forms homooligomers. Interacts with MRS2. N-glycosylated. Glycosylation is important for correct localization of the protein.

The protein localises to the mitochondrion inner membrane. Functionally, mitochondrial inner membrane magnesium transporter required for mitochondrial magnesium homeostasis. Modulates the conductance of the MRS2 channel. Involved in the splicing of mRNA group II introns in mitochondria by affecting mitochondrial magnesium concentrations, which are critical for group II intron splicing. The sequence is that of Mitochondrial inner membrane magnesium transporter MFM1 (MFM1) from Saccharomyces cerevisiae (strain ATCC 204508 / S288c) (Baker's yeast).